The primary structure comprises 208 residues: Proheparin-binding EGF-like growth factor (208 aa).

The signal sequence occupies residues 1-23; the sequence is MKLLPSVVLKLFLAAVFSALVTG. The propeptide occupies 24 to 62; that stretch reads ESLERLRRGLADGTSNLVSPTESTDQLLPPGGGRGREVL. Residues 24–161 are Extracellular-facing; that stretch reads ESLERLRRGL…NRLYTYDHTT (138 aa). Positions 37–49 are enriched in polar residues; the sequence is TSNLVSPTESTDQ. Disordered stretches follow at residues 37-57 and 81-104; these read TSNLVSPTESTDQLLPPGGGR and QALATPSKEERGKRKKKGKGLGKK. Thr85 carries an O-linked (GalNAc...) threonine glycan. The span at 93 to 102 shows a compositional bias: basic residues; it reads KRKKKGKGLG. One can recognise an EGF-like domain in the interval 104–144; that stretch reads KRDPCLRKYKDFCIHGECKYVKELRAPSCICHPGYHGERCH. 3 disulfides stabilise this stretch: Cys108–Cys121, Cys116–Cys132, and Cys134–Cys143. A propeptide spans 149–208 (C-terminal); sequence PVKNRLYTYDHTTILAVVAVVLSSVCLLVIVGLLMFRYHRRGGYDVENEEKVKLGVTASH. The helical transmembrane segment at 162 to 182 threads the bilayer; it reads ILAVVAVVLSSVCLLVIVGLL. At 183–208 the chain is on the cytoplasmic side; that stretch reads MFRYHRRGGYDVENEEKVKLGVTASH.

In terms of assembly, interacts with FBLN1. Interacts with EGFR and ERBB4. In terms of processing, O-glycosylated. Macrophages, midbrain, cerebellum, hypothalamus, cerebral cortex, bulbourethral gland, lung, heart ventricle, kidney, skin, prostate, seminal vesicle, testis; at low levels in lymph node, thymus, spleen; not detected in pituitary, olfactory bulb, thyroid, duodenum, pancreas, liver, submaxillary gland.

It is found in the secreted. The protein localises to the extracellular space. The protein resides in the cell membrane. Functionally, growth factor that mediates its effects via EGFR, ERBB2 and ERBB4. Required for normal cardiac valve formation and normal heart function. Promotes smooth muscle cell proliferation. May be involved in macrophage-mediated cellular proliferation. It is mitogenic for fibroblasts, but not endothelial cells. It is able to bind EGF receptor/EGFR with higher affinity than EGF itself and is a far more potent mitogen for smooth muscle cells than EGF. Also acts as a diphtheria toxin receptor. This chain is Proheparin-binding EGF-like growth factor (HBEGF), found in Sus scrofa (Pig).